Consider the following 235-residue polypeptide: Probable transcriptional regulatory protein Ccur92_05350 (235 aa).

This sequence belongs to the TACO1 family.

It localises to the cytoplasm. This Campylobacter curvus (strain 525.92) protein is Probable transcriptional regulatory protein Ccur92_05350.